A 240-amino-acid chain; its full sequence is UDP-2,3-diacylglucosamine hydrolase (240 aa).

Positions 8, 10, 41, 79, and 114 each coordinate Mn(2+). Position 79–80 (79–80 (NR)) interacts with substrate. Residues D122, S160, N164, K167, and H195 each coordinate substrate. H195 and H197 together coordinate Mn(2+).

This sequence belongs to the LpxH family. Mn(2+) serves as cofactor.

It localises to the cell inner membrane. It carries out the reaction UDP-2-N,3-O-bis[(3R)-3-hydroxytetradecanoyl]-alpha-D-glucosamine + H2O = 2-N,3-O-bis[(3R)-3-hydroxytetradecanoyl]-alpha-D-glucosaminyl 1-phosphate + UMP + 2 H(+). The protein operates within glycolipid biosynthesis; lipid IV(A) biosynthesis; lipid IV(A) from (3R)-3-hydroxytetradecanoyl-[acyl-carrier-protein] and UDP-N-acetyl-alpha-D-glucosamine: step 4/6. In terms of biological role, hydrolyzes the pyrophosphate bond of UDP-2,3-diacylglucosamine to yield 2,3-diacylglucosamine 1-phosphate (lipid X) and UMP by catalyzing the attack of water at the alpha-P atom. Involved in the biosynthesis of lipid A, a phosphorylated glycolipid that anchors the lipopolysaccharide to the outer membrane of the cell. The chain is UDP-2,3-diacylglucosamine hydrolase from Salmonella newport (strain SL254).